The primary structure comprises 128 residues: Iron-sulfur cluster insertion protein ErpA (128 aa).

The iron-sulfur cluster site is built by cysteine 56, cysteine 120, and cysteine 122.

This sequence belongs to the HesB/IscA family. Homodimer. Iron-sulfur cluster serves as cofactor.

Required for insertion of 4Fe-4S clusters for at least IspG. The chain is Iron-sulfur cluster insertion protein ErpA from Xylella fastidiosa (strain M23).